The following is a 77-amino-acid chain: Cell division topological specificity factor (77 aa).

The protein belongs to the MinE family.

Functionally, prevents the cell division inhibition by proteins MinC and MinD at internal division sites while permitting inhibition at polar sites. This ensures cell division at the proper site by restricting the formation of a division septum at the midpoint of the long axis of the cell. In Nautilia profundicola (strain ATCC BAA-1463 / DSM 18972 / AmH), this protein is Cell division topological specificity factor.